A 283-amino-acid polypeptide reads, in one-letter code: Homeobox protein Hox-C12b (283 aa).

A DNA-binding region (homeobox) is located at residues 215–274 (TRKKRKPYSKLQLNELEGEFILNEFITRQRRRELSDRLNLTDQQVKIWFQNRRMKKKRLL).

It belongs to the Abd-B homeobox family.

It is found in the nucleus. Sequence-specific transcription factor which is part of a developmental regulatory system that provides cells with specific positional identities on the anterior-posterior axis. The polypeptide is Homeobox protein Hox-C12b (hoxc12b) (Danio rerio (Zebrafish)).